Reading from the N-terminus, the 412-residue chain is Protein MT3510 (412 aa).

Position 227 is an N6-(pyridoxal phosphate)lysine (K227).

It belongs to the DegT/DnrJ/EryC1 family.

The chain is Protein MT3510 from Mycobacterium tuberculosis (strain CDC 1551 / Oshkosh).